Consider the following 557-residue polypeptide: Dihydroxy-acid dehydratase (557 aa).

Asp78 provides a ligand contact to Mg(2+). Cys119 serves as a coordination point for [2Fe-2S] cluster. Mg(2+)-binding residues include Asp120 and Lys121. At Lys121 the chain carries N6-carboxylysine. Residue Cys192 coordinates [2Fe-2S] cluster. Mg(2+) is bound at residue Glu442. Ser468 serves as the catalytic Proton acceptor.

The protein belongs to the IlvD/Edd family. In terms of assembly, homodimer. [2Fe-2S] cluster is required as a cofactor. It depends on Mg(2+) as a cofactor.

It carries out the reaction (2R)-2,3-dihydroxy-3-methylbutanoate = 3-methyl-2-oxobutanoate + H2O. It catalyses the reaction (2R,3R)-2,3-dihydroxy-3-methylpentanoate = (S)-3-methyl-2-oxopentanoate + H2O. It functions in the pathway amino-acid biosynthesis; L-isoleucine biosynthesis; L-isoleucine from 2-oxobutanoate: step 3/4. It participates in amino-acid biosynthesis; L-valine biosynthesis; L-valine from pyruvate: step 3/4. Functions in the biosynthesis of branched-chain amino acids. Catalyzes the dehydration of (2R,3R)-2,3-dihydroxy-3-methylpentanoate (2,3-dihydroxy-3-methylvalerate) into 2-oxo-3-methylpentanoate (2-oxo-3-methylvalerate) and of (2R)-2,3-dihydroxy-3-methylbutanoate (2,3-dihydroxyisovalerate) into 2-oxo-3-methylbutanoate (2-oxoisovalerate), the penultimate precursor to L-isoleucine and L-valine, respectively. This chain is Dihydroxy-acid dehydratase, found in Bacillus cereus (strain ZK / E33L).